Here is a 72-residue protein sequence, read N- to C-terminus: Gas vesicle protein A (72 aa).

This sequence belongs to the gas vesicle GvpA family. As to quaternary structure, the gas vesicle shell is 2 nm thick and consists of a single layer of this protein. It forms helical ribs nearly perpendicular to the long axis of the vesicle.

Its subcellular location is the gas vesicle shell. Its function is as follows. Gas vesicles are hollow, gas filled proteinaceous nanostructures found in some microorganisms. During planktonic growth they allow positioning of the organism at a favorable depth for light or nutrient acquisition. GvpA forms the protein shell. In Pseudanabaena galeata (strain PCC 6901), this protein is Gas vesicle protein A.